The chain runs to 262 residues: Transcription factor Spi-B (262 aa).

Positions 1–31 are TAD1 (Acidic); the sequence is MLALEAAQLDGPHFSCLYPDGVFYDLDSCKH. The TAD2 stretch occupies residues 41 to 61; it reads PDSLWDWTVAPPVPATPYEAF. The segment at 140-163 is disordered; the sequence is ALEVSDSESDEALVAGPEGKGSEA. Positions 169-252 form a DNA-binding region, ETS; the sequence is LRLYQFLLGL…VKRKLTYQFD (84 aa).

This sequence belongs to the ETS family. Can form homotypic interactions. Interacts with IRF4/Pip. Interacts with JUN. Interacts with TBP. May also interact with CREBBP and EP300. Interacts with NONO/p54(nrb). Expressed in plasmacytoid dendritic cells (pDCs) and B-cells, not expressed in T-cells or granulocytes. May also be enriched in stem cell populations of the liver.

It is found in the nucleus. Its subcellular location is the cytoplasm. In terms of biological role, sequence specific transcriptional activator which binds to the PU-box, a purine-rich DNA sequence (5'-GAGGAA-3') that can act as a lymphoid-specific enhancer. Promotes development of plasmacytoid dendritic cells (pDCs), also known as type 2 DC precursors (pre-DC2) or natural interferon (IFN)-producing cells. These cells have the capacity to produce large amounts of interferon and block viral replication. May be required for B-cell receptor (BCR) signaling, which is necessary for normal B-cell development and antigenic stimulation. In Homo sapiens (Human), this protein is Transcription factor Spi-B (SPIB).